The sequence spans 631 residues: Probable ATP-dependent RNA helicase DDX53 (631 aa).

Residues 48-109 (EPPLCFKIKN…EMKAKAKAAI (62 aa)) form the KH domain. Positions 222-250 (RFKDAFQQYPDLLKSIIRVGIVKPTPIQS) match the Q motif motif. Residues lysine 244, glutamine 249, 268-273 (TGTGKT), and histidine 311 each bind ATP. In terms of domain architecture, Helicase ATP-binding spans 253 to 428 (WPIILQGIDL…LSYLKDPMIV (176 aa)). The short motif at 376-379 (DEAD) is the DEAD box element. The region spanning 440-601 (TVKQNIIVTT…SVPEDLVVMA (162 aa)) is the Helicase C-terminal domain.

Belongs to the DEAD box helicase family. In terms of tissue distribution, expressed in testis. Wide expression in various cancer tissues and cancer cell lines.

It localises to the nucleus. It catalyses the reaction ATP + H2O = ADP + phosphate + H(+). In Homo sapiens (Human), this protein is Probable ATP-dependent RNA helicase DDX53 (DDX53).